A 116-amino-acid chain; its full sequence is Ribosome-binding factor A (116 aa).

It belongs to the RbfA family. Monomer. Binds 30S ribosomal subunits, but not 50S ribosomal subunits or 70S ribosomes.

The protein resides in the cytoplasm. In terms of biological role, one of several proteins that assist in the late maturation steps of the functional core of the 30S ribosomal subunit. Associates with free 30S ribosomal subunits (but not with 30S subunits that are part of 70S ribosomes or polysomes). Required for efficient processing of 16S rRNA. May interact with the 5'-terminal helix region of 16S rRNA. In Clostridium botulinum (strain Alaska E43 / Type E3), this protein is Ribosome-binding factor A.